Here is a 332-residue protein sequence, read N- to C-terminus: 5-dehydro-2-deoxygluconokinase (332 aa).

Belongs to the carbohydrate kinase PfkB family.

The enzyme catalyses 5-dehydro-2-deoxy-D-gluconate + ATP = 6-phospho-5-dehydro-2-deoxy-D-gluconate + ADP + H(+). It functions in the pathway polyol metabolism; myo-inositol degradation into acetyl-CoA; acetyl-CoA from myo-inositol: step 5/7. In terms of biological role, catalyzes the phosphorylation of 5-dehydro-2-deoxy-D-gluconate (2-deoxy-5-keto-D-gluconate or DKG) to 6-phospho-5-dehydro-2-deoxy-D-gluconate (DKGP). The polypeptide is 5-dehydro-2-deoxygluconokinase (Bacillus thuringiensis (strain Al Hakam)).